An 89-amino-acid polypeptide reads, in one-letter code: Large ribosomal subunit protein bL27 (89 aa).

A disordered region spans residues 1 to 24 (MAHKKAGGSSRNGRDSDGRRLGVK).

This sequence belongs to the bacterial ribosomal protein bL27 family.

In Azorhizobium caulinodans (strain ATCC 43989 / DSM 5975 / JCM 20966 / LMG 6465 / NBRC 14845 / NCIMB 13405 / ORS 571), this protein is Large ribosomal subunit protein bL27.